The sequence spans 469 residues: NADH-quinone oxidoreductase subunit N (469 aa).

14 helical membrane passes run 2–22 (IALL…FLCV), 28–48 (RYSI…FFIV), 70–90 (FSFC…ISSF), 101–121 (EMFA…LSVE), 122–142 (LILT…MIAM), 157–177 (FLLS…VFGV), 194–214 (FLSI…IAIF), 233–253 (GFLA…LCFL), 261–281 (ILQG…NLLS), 290–310 (ILIA…SSVG), 315–335 (IYPA…LFAI), 361–381 (AFAF…VGFL), 398–418 (LAIF…KIII), and 447–467 (ILFI…LNLF).

Belongs to the complex I subunit 2 family. NDH-1 is composed of 14 different subunits. Subunits NuoA, H, J, K, L, M, N constitute the membrane sector of the complex.

It localises to the cell inner membrane. It carries out the reaction a quinone + NADH + 5 H(+)(in) = a quinol + NAD(+) + 4 H(+)(out). Functionally, NDH-1 shuttles electrons from NADH, via FMN and iron-sulfur (Fe-S) centers, to quinones in the respiratory chain. The immediate electron acceptor for the enzyme in this species is believed to be ubiquinone. Couples the redox reaction to proton translocation (for every two electrons transferred, four hydrogen ions are translocated across the cytoplasmic membrane), and thus conserves the redox energy in a proton gradient. In Campylobacter fetus subsp. fetus (strain 82-40), this protein is NADH-quinone oxidoreductase subunit N.